A 268-amino-acid polypeptide reads, in one-letter code: Receptor expression-enhancing protein 2 (268 aa).

The next 2 helical transmembrane spans lie at 1–21 and 35–55; these read MVSWIISRMVVLAFGTLYPAY and YVKWMMYWIVFALFTTAETIT. A disordered region spans residues 170-268; that stretch reads GDDTHTAATL…TTANNVAESP (99 aa). The span at 180–196 shows a compositional bias: low complexity; the sequence is PRAKTATRTVRATPVPA. Positions 199–216 are enriched in basic and acidic residues; it reads ESQHSSRSDDQSDSRTEH. Residues 228–248 are compositionally biased toward low complexity; the sequence is RIAITRAAKKPAAAKTEQTTK. The segment covering 249 to 258 has biased composition (basic residues); the sequence is TVKKAPKKKP.

This sequence belongs to the DP1 family. Interacts with odorant receptor proteins.

It is found in the membrane. In terms of biological role, may enhance the cell surface expression of odorant receptors. The protein is Receptor expression-enhancing protein 2 (reep2) of Danio rerio (Zebrafish).